A 650-amino-acid chain; its full sequence is 1-deoxy-D-xylulose-5-phosphate synthase (650 aa).

Thiamine diphosphate is bound by residues His-73 and 113–115; that span reads SHA. Residue Asp-145 coordinates Mg(2+). Thiamine diphosphate is bound by residues 146 to 147, Asn-175, Tyr-287, and Glu-369; that span reads GA. Asn-175 serves as a coordination point for Mg(2+).

It belongs to the transketolase family. DXPS subfamily. In terms of assembly, homodimer. Mg(2+) is required as a cofactor. It depends on thiamine diphosphate as a cofactor.

The catalysed reaction is D-glyceraldehyde 3-phosphate + pyruvate + H(+) = 1-deoxy-D-xylulose 5-phosphate + CO2. Its pathway is metabolic intermediate biosynthesis; 1-deoxy-D-xylulose 5-phosphate biosynthesis; 1-deoxy-D-xylulose 5-phosphate from D-glyceraldehyde 3-phosphate and pyruvate: step 1/1. Catalyzes the acyloin condensation reaction between C atoms 2 and 3 of pyruvate and glyceraldehyde 3-phosphate to yield 1-deoxy-D-xylulose-5-phosphate (DXP). The chain is 1-deoxy-D-xylulose-5-phosphate synthase from Leifsonia xyli subsp. xyli (strain CTCB07).